The chain runs to 323 residues: Beta-ketoacyl-[acyl-carrier-protein] synthase III 1 (323 aa).

Active-site residues include Cys114 and His254. Residues 255-259 (QANLR) form an ACP-binding region. The active site involves Asn284.

Belongs to the thiolase-like superfamily. FabH family. Homodimer.

Its subcellular location is the cytoplasm. The enzyme catalyses malonyl-[ACP] + acetyl-CoA + H(+) = 3-oxobutanoyl-[ACP] + CO2 + CoA. It functions in the pathway lipid metabolism; fatty acid biosynthesis. In terms of biological role, catalyzes the condensation reaction of fatty acid synthesis by the addition to an acyl acceptor of two carbons from malonyl-ACP. Catalyzes the first condensation reaction which initiates fatty acid synthesis and may therefore play a role in governing the total rate of fatty acid production. Possesses both acetoacetyl-ACP synthase and acetyl transacylase activities. Its substrate specificity determines the biosynthesis of branched-chain and/or straight-chain of fatty acids. This chain is Beta-ketoacyl-[acyl-carrier-protein] synthase III 1, found in Lactiplantibacillus plantarum (strain ATCC BAA-793 / NCIMB 8826 / WCFS1) (Lactobacillus plantarum).